A 357-amino-acid polypeptide reads, in one-letter code: Glutamate 5-kinase (357 aa).

Lys7 lines the ATP pocket. Residues Ser43, Asp130, and Asn142 each coordinate substrate. ATP contacts are provided by residues 162-163 and 205-211; these read TD and TGGMTTK. The region spanning 270–341 is the PUA domain; it reads EGELCLDQGA…QALSVVTDAE (72 aa).

This sequence belongs to the glutamate 5-kinase family.

The protein localises to the cytoplasm. It catalyses the reaction L-glutamate + ATP = L-glutamyl 5-phosphate + ADP. Its pathway is amino-acid biosynthesis; L-proline biosynthesis; L-glutamate 5-semialdehyde from L-glutamate: step 1/2. Functionally, catalyzes the transfer of a phosphate group to glutamate to form L-glutamate 5-phosphate. The protein is Glutamate 5-kinase of Synechococcus sp. (strain CC9902).